The primary structure comprises 136 residues: uncharacterized protein (136 aa).

This is an uncharacterized protein from Fowl adenovirus A serotype 1 (strain CELO / Phelps) (FAdV-1).